Here is a 429-residue protein sequence, read N- to C-terminus: Glutamate-1-semialdehyde 2,1-aminomutase (429 aa).

Lys267 carries the N6-(pyridoxal phosphate)lysine modification.

Belongs to the class-III pyridoxal-phosphate-dependent aminotransferase family. HemL subfamily. As to quaternary structure, homodimer. Pyridoxal 5'-phosphate is required as a cofactor.

The protein resides in the cytoplasm. It catalyses the reaction (S)-4-amino-5-oxopentanoate = 5-aminolevulinate. The protein operates within porphyrin-containing compound metabolism; protoporphyrin-IX biosynthesis; 5-aminolevulinate from L-glutamyl-tRNA(Glu): step 2/2. The protein is Glutamate-1-semialdehyde 2,1-aminomutase of Stenotrophomonas maltophilia (strain R551-3).